Reading from the N-terminus, the 426-residue chain is Trigger factor (426 aa).

Residues 165–239 enclose the PPIase FKBP-type domain; it reads GDVYKLNEAG…ISEIKRLELP (75 aa).

Belongs to the FKBP-type PPIase family. Tig subfamily.

It localises to the cytoplasm. The enzyme catalyses [protein]-peptidylproline (omega=180) = [protein]-peptidylproline (omega=0). Involved in protein export. Acts as a chaperone by maintaining the newly synthesized protein in an open conformation. Functions as a peptidyl-prolyl cis-trans isomerase. The polypeptide is Trigger factor (Pelodictyon phaeoclathratiforme (strain DSM 5477 / BU-1)).